The chain runs to 456 residues: Bifunctional protein GlmU (456 aa).

A pyrophosphorylase region spans residues 1-229; it reads MLNNAMSVVI…LSEVEGVNNR (229 aa). Residues 11–14, Lys-25, Gln-76, 81–82, 103–105, Gly-140, Glu-154, Asn-169, and Asn-227 each bind UDP-N-acetyl-alpha-D-glucosamine; these read LAAG, GT, and YGD. A Mg(2+)-binding site is contributed by Asp-105. Residue Asn-227 participates in Mg(2+) binding. Positions 230–250 are linker; that stretch reads LQLSRLERVYQSEQAEKLLLA. The tract at residues 251–456 is N-acetyltransferase; that stretch reads GVMLRDPARF…EGWRRPVKKK (206 aa). UDP-N-acetyl-alpha-D-glucosamine is bound by residues Arg-333 and Lys-351. His-363 functions as the Proton acceptor in the catalytic mechanism. UDP-N-acetyl-alpha-D-glucosamine-binding residues include Tyr-366 and Asn-377. Acetyl-CoA contacts are provided by residues Ala-380, 386-387, Ser-405, Ala-423, and Arg-440; that span reads NY.

In the N-terminal section; belongs to the N-acetylglucosamine-1-phosphate uridyltransferase family. This sequence in the C-terminal section; belongs to the transferase hexapeptide repeat family. Homotrimer. Mg(2+) is required as a cofactor.

It localises to the cytoplasm. It carries out the reaction alpha-D-glucosamine 1-phosphate + acetyl-CoA = N-acetyl-alpha-D-glucosamine 1-phosphate + CoA + H(+). The catalysed reaction is N-acetyl-alpha-D-glucosamine 1-phosphate + UTP + H(+) = UDP-N-acetyl-alpha-D-glucosamine + diphosphate. It participates in nucleotide-sugar biosynthesis; UDP-N-acetyl-alpha-D-glucosamine biosynthesis; N-acetyl-alpha-D-glucosamine 1-phosphate from alpha-D-glucosamine 6-phosphate (route II): step 2/2. Its pathway is nucleotide-sugar biosynthesis; UDP-N-acetyl-alpha-D-glucosamine biosynthesis; UDP-N-acetyl-alpha-D-glucosamine from N-acetyl-alpha-D-glucosamine 1-phosphate: step 1/1. The protein operates within bacterial outer membrane biogenesis; LPS lipid A biosynthesis. In terms of biological role, catalyzes the last two sequential reactions in the de novo biosynthetic pathway for UDP-N-acetylglucosamine (UDP-GlcNAc). The C-terminal domain catalyzes the transfer of acetyl group from acetyl coenzyme A to glucosamine-1-phosphate (GlcN-1-P) to produce N-acetylglucosamine-1-phosphate (GlcNAc-1-P), which is converted into UDP-GlcNAc by the transfer of uridine 5-monophosphate (from uridine 5-triphosphate), a reaction catalyzed by the N-terminal domain. This Shigella boydii serotype 18 (strain CDC 3083-94 / BS512) protein is Bifunctional protein GlmU.